An 81-amino-acid chain; its full sequence is Neuronatin (81 aa).

Belongs to the neuronatin family.

Functionally, may participate in the maintenance of segment identity in the hindbrain and pituitary development, and maturation or maintenance of the overall structure of the nervous system. May function as a regulatory subunit of ion channels. In Sus scrofa (Pig), this protein is Neuronatin (NNAT).